The chain runs to 483 residues: Glutamyl-tRNA(Gln) amidotransferase subunit A (483 aa).

Catalysis depends on charge relay system residues K76 and S151. The Acyl-ester intermediate role is filled by S175.

The protein belongs to the amidase family. GatA subfamily. Heterotrimer of A, B and C subunits.

It catalyses the reaction L-glutamyl-tRNA(Gln) + L-glutamine + ATP + H2O = L-glutaminyl-tRNA(Gln) + L-glutamate + ADP + phosphate + H(+). Functionally, allows the formation of correctly charged Gln-tRNA(Gln) through the transamidation of misacylated Glu-tRNA(Gln) in organisms which lack glutaminyl-tRNA synthetase. The reaction takes place in the presence of glutamine and ATP through an activated gamma-phospho-Glu-tRNA(Gln). This Pseudomonas syringae pv. tomato (strain ATCC BAA-871 / DC3000) protein is Glutamyl-tRNA(Gln) amidotransferase subunit A.